A 298-amino-acid polypeptide reads, in one-letter code: Apolipoprotein E (298 aa).

Positions 1 to 18 (MKVLWAALVVTLLAGCRA) are cleaved as a signal peptide. Repeat copies occupy residues 74-94 (LLIEDTMKEVKDYKAELEKEL), 95-116 (GPVAEDTKARLAKELQAAQARL), 117-138 (GADMEEVRNRLSQYRSEVQAML), 139-160 (GQSSEELRARLTSHLRKMRKRL), 161-182 (QRDIDELQKRMAVYKAGAQEGA), 183-203 (ERGVSAIRERLGSLIEQGRLQ), 204-221 (ALTSQPLQERAQAWGEQM), and 222-243 (RGRLEKVGSQARDRLEEVREQM). The 8 X 22 AA approximate tandem repeats stretch occupies residues 95-243 (GPVAEDTKAR…DRLEEVREQM (149 aa)). At methionine 137 the chain carries Methionine sulfoxide. The residue at position 141 (serine 141) is a Phosphoserine. An LDL and other lipoprotein receptors binding region spans residues 151-161 (SHLRKMRKRLQ). Heparin is bound at residue 155-158 (KMRK). A lipid-binding and lipoprotein association region spans residues 203 to 271 (QALTSQPLQE…KSWFEPMMED (69 aa)). Position 217–224 (217–224 (WGEQMRGR)) interacts with heparin. The tract at residues 259–271 (ARLKSWFEPMMED) is specificity for association with VLDL.

The protein belongs to the apolipoprotein A1/A4/E family. Homotetramer. May interact with ABCA1; functionally associated with ABCA1 in the biogenesis of HDLs. May interact with APP/A4 amyloid-beta peptide; the interaction is extremely stable in vitro but its physiological significance is unclear. May interact with MAPT. May interact with MAP2. In the cerebrospinal fluid, interacts with secreted SORL1. Interacts with PMEL; this allows the loading of PMEL luminal fragment on ILVs to induce fibril nucleation. Post-translationally, APOE exists as multiple glycosylated and sialylated glycoforms within cells and in plasma. The extent of glycosylation and sialylation are tissue and context specific. Glycated in plasma VLDL. In terms of processing, phosphorylated by FAM20C in the extracellular medium.

Its subcellular location is the secreted. It is found in the extracellular space. The protein localises to the extracellular matrix. The protein resides in the extracellular vesicle. It localises to the endosome. Its subcellular location is the multivesicular body. Functionally, APOE is an apolipoprotein, a protein associating with lipid particles, that mainly functions in lipoprotein-mediated lipid transport between organs via the plasma and interstitial fluids. APOE is a core component of plasma lipoproteins and is involved in their production, conversion and clearance. Apolipoproteins are amphipathic molecules that interact both with lipids of the lipoprotein particle core and the aqueous environment of the plasma. As such, APOE associates with chylomicrons, chylomicron remnants, very low density lipoproteins (VLDL) and intermediate density lipoproteins (IDL) but shows a preferential binding to high-density lipoproteins (HDL). It also binds a wide range of cellular receptors including the LDL receptor/LDLR, the LDL receptor-related proteins LRP1, LRP2 and LRP8 and the very low-density lipoprotein receptor/VLDLR that mediate the cellular uptake of the APOE-containing lipoprotein particles. Finally, APOE also has a heparin-binding activity and binds heparan-sulfate proteoglycans on the surface of cells, a property that supports the capture and the receptor-mediated uptake of APOE-containing lipoproteins by cells. A main function of APOE is to mediate lipoprotein clearance through the uptake of chylomicrons, VLDLs, and HDLs by hepatocytes. APOE is also involved in the biosynthesis by the liver of VLDLs as well as their uptake by peripheral tissues ensuring the delivery of triglycerides and energy storage in muscle, heart and adipose tissues. By participating in the lipoprotein-mediated distribution of lipids among tissues, APOE plays a critical role in plasma and tissues lipid homeostasis. APOE is also involved in two steps of reverse cholesterol transport, the HDLs-mediated transport of cholesterol from peripheral tissues to the liver, and thereby plays an important role in cholesterol homeostasis. First, it is functionally associated with ABCA1 in the biogenesis of HDLs in tissues. Second, it is enriched in circulating HDLs and mediates their uptake by hepatocytes. APOE also plays an important role in lipid transport in the central nervous system, regulating neuron survival and sprouting. In Cavia tschudii (Montane guinea pig), this protein is Apolipoprotein E (APOE).